We begin with the raw amino-acid sequence, 201 residues long: Imidazole glycerol phosphate synthase subunit HisH (201 aa).

The region spanning 2–201 (KVVILDTGCA…ARLLKNFLEM (200 aa)) is the Glutamine amidotransferase type-1 domain. Cys77 functions as the Nucleophile in the catalytic mechanism. Active-site residues include His183 and Glu185.

As to quaternary structure, heterodimer of HisH and HisF.

Its subcellular location is the cytoplasm. The catalysed reaction is 5-[(5-phospho-1-deoxy-D-ribulos-1-ylimino)methylamino]-1-(5-phospho-beta-D-ribosyl)imidazole-4-carboxamide + L-glutamine = D-erythro-1-(imidazol-4-yl)glycerol 3-phosphate + 5-amino-1-(5-phospho-beta-D-ribosyl)imidazole-4-carboxamide + L-glutamate + H(+). It carries out the reaction L-glutamine + H2O = L-glutamate + NH4(+). The protein operates within amino-acid biosynthesis; L-histidine biosynthesis; L-histidine from 5-phospho-alpha-D-ribose 1-diphosphate: step 5/9. Its function is as follows. IGPS catalyzes the conversion of PRFAR and glutamine to IGP, AICAR and glutamate. The HisH subunit catalyzes the hydrolysis of glutamine to glutamate and ammonia as part of the synthesis of IGP and AICAR. The resulting ammonia molecule is channeled to the active site of HisF. The sequence is that of Imidazole glycerol phosphate synthase subunit HisH from Photorhabdus laumondii subsp. laumondii (strain DSM 15139 / CIP 105565 / TT01) (Photorhabdus luminescens subsp. laumondii).